A 245-amino-acid polypeptide reads, in one-letter code: UDP-2,3-diacylglucosamine hydrolase (245 aa).

Residues Asp8, His10, Asp41, Asn79, and His114 each coordinate Mn(2+). 79–80 (NR) is a binding site for substrate. 5 residues coordinate substrate: Asp122, Ser160, Asn164, Lys167, and His195. Mn(2+) is bound by residues His195 and His197.

Belongs to the LpxH family. It depends on Mn(2+) as a cofactor.

The protein localises to the cell inner membrane. It catalyses the reaction UDP-2-N,3-O-bis[(3R)-3-hydroxytetradecanoyl]-alpha-D-glucosamine + H2O = 2-N,3-O-bis[(3R)-3-hydroxytetradecanoyl]-alpha-D-glucosaminyl 1-phosphate + UMP + 2 H(+). The protein operates within glycolipid biosynthesis; lipid IV(A) biosynthesis; lipid IV(A) from (3R)-3-hydroxytetradecanoyl-[acyl-carrier-protein] and UDP-N-acetyl-alpha-D-glucosamine: step 4/6. Hydrolyzes the pyrophosphate bond of UDP-2,3-diacylglucosamine to yield 2,3-diacylglucosamine 1-phosphate (lipid X) and UMP by catalyzing the attack of water at the alpha-P atom. Involved in the biosynthesis of lipid A, a phosphorylated glycolipid that anchors the lipopolysaccharide to the outer membrane of the cell. The polypeptide is UDP-2,3-diacylglucosamine hydrolase (Photobacterium profundum (strain SS9)).